Reading from the N-terminus, the 1089-residue chain is Translocase of chloroplast 120, chloroplastic (1089 aa).

Gly2 bears the N-acetylglycine mark. Disordered regions lie at residues Ala158–Ser179, Thr255–Arg339, and Gln353–Glu381. Residues Glu165–Gly176 are compositionally biased toward polar residues. Phosphoserine occurs at positions 179, 263, and 283. A compositionally biased stretch (basic and acidic residues) spans Glu300 to Glu312. Positions Ala327–Arg339 are enriched in low complexity. Residues Gln353–Ala374 are compositionally biased toward polar residues. The 230-residue stretch at Asp454–Gln683 folds into the AIG1-type G domain. A G1 region spans residues Gly463–Ser470. Residues Gly466–Ala471 and Asp485–Gly490 contribute to the GTP site. Mg(2+) is bound at residue Ser470. The homodimerization stretch occupies residues Asp485–Gln488. Residues Val489 to Lys493 are G2. The tract at residues Asp510–Gly513 is G3. Residues Arg548–Ser553 are homodimerization. The interval Thr582–Ala585 is G4. Residues His583 and Glu631 to Asn632 each bind GTP. The interval Glu631 to His633 is G5. The segment at Pro710 to Glu748 is disordered. Acidic residues predominate over residues Gln713 to Glu737. A coiled-coil region spans residues Arg767–Lys788. Residues Leu1064–Tyr1080 form a helical membrane-spanning segment.

It belongs to the TRAFAC class TrmE-Era-EngA-EngB-Septin-like GTPase superfamily. AIG1/Toc34/Toc159-like paraseptin GTPase family. TOC159 subfamily. As to quaternary structure, homodimer. Part of the TOC core complex that includes 1 protein for the specific recognition of transit peptides surrounded by a ring composed of four proteins forming translocation channels, and four to five GTP-binding proteins providing energy. This core complex can interact with components of the TIC complex to form a larger import complex. Chloroplastic protein precursor such as prSS (precursor of the RuBisCO small subunit) interacts with these complexes. The TOC complex contains a specific subset of polar lipids such as digalactosyldiacylglyceride (DGDG), phosphatidylcholine (PC) and phosphatidylglycerol (PG). The cofactor is Mg(2+). Post-translationally, phosphorylated by KOC1. Expressed in seedlings, flowers, and roots.

The protein localises to the plastid. It is found in the chloroplast outer membrane. It localises to the cytoplasm. Its function is as follows. GTPase involved in protein precursor import into chloroplasts. Seems to recognize chloroplast-destined precursor proteins and regulate their presentation to the translocation channel through GTP hydrolysis. Probably specialized in the import of nuclear encoded non-photosynthetic preproteins from the cytoplasm to the chloroplast. This is Translocase of chloroplast 120, chloroplastic from Arabidopsis thaliana (Mouse-ear cress).